The primary structure comprises 158 residues: Cyclic pyranopterin monophosphate synthase (158 aa).

Substrate-binding positions include 75–77 (LCH) and 113–114 (ME). Residue Asp-128 is part of the active site.

This sequence belongs to the MoaC family. In terms of assembly, homohexamer; trimer of dimers.

It carries out the reaction (8S)-3',8-cyclo-7,8-dihydroguanosine 5'-triphosphate = cyclic pyranopterin phosphate + diphosphate. It participates in cofactor biosynthesis; molybdopterin biosynthesis. Its function is as follows. Catalyzes the conversion of (8S)-3',8-cyclo-7,8-dihydroguanosine 5'-triphosphate to cyclic pyranopterin monophosphate (cPMP). The chain is Cyclic pyranopterin monophosphate synthase from Dinoroseobacter shibae (strain DSM 16493 / NCIMB 14021 / DFL 12).